The sequence spans 275 residues: Holocytochrome c-type synthase (275 aa).

Disordered regions lie at residues Met-1 to Ser-59 and Lys-83 to Asp-102. Residue Gly-2 is the site of N-myristoyl glycine attachment. The segment covering Ala-9–Pro-28 has biased composition (polar residues). HRM repeat units lie at residues Gly-31–Glu-36 and Gly-41–Ala-46. The segment covering Pro-48–Ser-59 has biased composition (polar residues). Residues Leu-91–Asp-102 are compositionally biased toward pro residues.

It belongs to the cytochrome c-type heme lyase family.

The protein localises to the mitochondrion inner membrane. Its subcellular location is the membrane. It catalyses the reaction holo-[cytochrome c] = apo-[cytochrome c] + heme b. Lyase that catalyzes the covalent linking of the heme group to the cytochrome C apoprotein to produce the mature functional cytochrome. The protein is Holocytochrome c-type synthase of Bos taurus (Bovine).